The following is a 227-amino-acid chain: Probable cytokinin riboside 5'-monophosphate phosphoribohydrolase LOGL9 (227 aa).

Positions 1 to 15 are enriched in polar residues; that stretch reads MYISSPHTSHFTSID. A disordered region spans residues 1–26; the sequence is MYISSPHTSHFTSIDRSPAVVSESDR. Substrate-binding positions include Glu-117, 135-136, and 152-158; these read RK and GYGTLEE.

The protein belongs to the LOG family. Expressed in roots, leaves and stems.

The enzyme catalyses N(6)-(dimethylallyl)adenosine 5'-phosphate + H2O = N(6)-dimethylallyladenine + D-ribose 5-phosphate. It catalyses the reaction 9-ribosyl-trans-zeatin 5'-phosphate + H2O = trans-zeatin + D-ribose 5-phosphate. Cytokinin-activating enzyme working in the direct activation pathway. Phosphoribohydrolase that converts inactive cytokinin nucleotides to the biologically active free-base forms. This is Probable cytokinin riboside 5'-monophosphate phosphoribohydrolase LOGL9 (LOGL9) from Oryza sativa subsp. japonica (Rice).